Consider the following 262-residue polypeptide: Transmembrane protein 81 (262 aa).

The signal sequence occupies residues Met-1–Ala-30. Over Ile-31–Ser-225 the chain is Extracellular. Asn-45 is a glycosylation site (N-linked (GlcNAc...) asparagine). Residues Thr-83–Val-171 form the Ig-like domain. The cysteines at positions 104 and 160 are disulfide-linked. A glycan (N-linked (GlcNAc...) asparagine) is linked at Asn-211. A helical transmembrane segment spans residues Leu-226–Leu-246. The Cytoplasmic segment spans residues Cys-247–Leu-262.

Forms a complex with IZUMO1 and SPACA6 on spermatocyte cell membrane required for fertilization.

The protein localises to the cell membrane. Its function is as follows. Essential fertilization factor required for male fertility. Part of a conserved trimeric sperm complex with the essential fertilization factors IZUMO1 and SPACA6 which bridges sperm and oocyte membranes during fertilization by binding to IZUMO1R/JUNO on the oocyte. The sequence is that of Transmembrane protein 81 (Tmem81) from Rattus norvegicus (Rat).